A 180-amino-acid chain; its full sequence is Large ribosomal subunit protein uL5c (180 aa).

The protein belongs to the universal ribosomal protein uL5 family. In terms of assembly, part of the 50S ribosomal subunit; contacts the 5S rRNA.

Its subcellular location is the plastid. It is found in the chloroplast. Functionally, binds 5S rRNA, forms part of the central protuberance of the 50S subunit. This is Large ribosomal subunit protein uL5c (rpl5) from Stigeoclonium helveticum (Green alga).